We begin with the raw amino-acid sequence, 476 residues long: Glutamate--tRNA ligase (476 aa).

A 'HIGH' region motif is present at residues 9 to 19 (PSPTGLFHIGT). The 'KMSKS' region motif lies at 248-252 (KLSKR). Lys-251 is a binding site for ATP.

Belongs to the class-I aminoacyl-tRNA synthetase family. Glutamate--tRNA ligase type 1 subfamily. In terms of assembly, monomer.

The protein localises to the cytoplasm. It carries out the reaction tRNA(Glu) + L-glutamate + ATP = L-glutamyl-tRNA(Glu) + AMP + diphosphate. Its function is as follows. Catalyzes the attachment of glutamate to tRNA(Glu) in a two-step reaction: glutamate is first activated by ATP to form Glu-AMP and then transferred to the acceptor end of tRNA(Glu). The chain is Glutamate--tRNA ligase from Prochlorococcus marinus (strain AS9601).